The primary structure comprises 342 residues: N-acetyl-gamma-glutamyl-phosphate reductase (342 aa).

C149 is an active-site residue.

Belongs to the NAGSA dehydrogenase family. Type 1 subfamily.

The protein resides in the cytoplasm. The enzyme catalyses N-acetyl-L-glutamate 5-semialdehyde + phosphate + NADP(+) = N-acetyl-L-glutamyl 5-phosphate + NADPH + H(+). The protein operates within amino-acid biosynthesis; L-arginine biosynthesis; N(2)-acetyl-L-ornithine from L-glutamate: step 3/4. In terms of biological role, catalyzes the NADPH-dependent reduction of N-acetyl-5-glutamyl phosphate to yield N-acetyl-L-glutamate 5-semialdehyde. This is N-acetyl-gamma-glutamyl-phosphate reductase from Paracoccus denitrificans (strain Pd 1222).